A 367-amino-acid chain; its full sequence is NADH-quinone oxidoreductase subunit H (367 aa).

8 helical membrane passes run 18–38, 87–107, 132–152, 180–200, 204–224, 257–277, 291–311, and 328–348; these read VLLF…VAYL, LCFL…WAVI, IGVL…IIAG, LTIV…IVIA, MPYW…ISAL, FFLG…IFFF, IIPG…CFIW, and GWKV…GILV.

Belongs to the complex I subunit 1 family. In terms of assembly, NDH-1 is composed of 14 different subunits. Subunits NuoA, H, J, K, L, M, N constitute the membrane sector of the complex.

Its subcellular location is the cell inner membrane. It carries out the reaction a quinone + NADH + 5 H(+)(in) = a quinol + NAD(+) + 4 H(+)(out). Its function is as follows. NDH-1 shuttles electrons from NADH, via FMN and iron-sulfur (Fe-S) centers, to quinones in the respiratory chain. The immediate electron acceptor for the enzyme in this species is believed to be ubiquinone. Couples the redox reaction to proton translocation (for every two electrons transferred, four hydrogen ions are translocated across the cytoplasmic membrane), and thus conserves the redox energy in a proton gradient. This subunit may bind ubiquinone. This chain is NADH-quinone oxidoreductase subunit H, found in Ehrlichia ruminantium (strain Gardel).